The chain runs to 386 residues: 5-hydroxytryptamine receptor 1B (386 aa).

At 1-42 (MEEQGIQCAPPPPAASQTGVPLVNLSHNCSAESHIYQDSIAL) the chain is on the extracellular side. N-linked (GlcNAc...) asparagine glycans are attached at residues Asn24 and Asn28. Residues 43–68 (PWKVLLVALLALITLATTLSNAFVIA) traverse the membrane as a helical segment. Residues 69–82 (TVYRTRKLHTPANY) are Cytoplasmic-facing. The chain crosses the membrane as a helical span at residues 83–107 (LIASLAVTDLLVSILVMPVSTMYTV). Residues 108–115 (TGRWTLGQ) are Extracellular-facing. Residues 116–141 (VVCDFWLSSDITCCTASIMHLCVIAL) traverse the membrane as a helical segment. Cys118 and Cys195 form a disulfide bridge. 2 residues coordinate ergotamine: Asp125 and Thr130. Residues 142–144 (DRY) carry the DRY motif; important for ligand-induced conformation changes and signaling motif. At 142 to 161 (DRYWAITDAVEYAAKRTPKR) the chain is on the cytoplasmic side. Residues 162-180 (AAIMIALVWVFSISISLPP) traverse the membrane as a helical segment. Topologically, residues 181 to 201 (FFWRQAKAEEEVLTCLVNTDH) are extracellular. Val197 lines the ergotamine pocket. Residues 202–225 (VLYTVYSTGGAFYLPTLLLIALYG) form a helical membrane-spanning segment. The Cytoplasmic portion of the chain corresponds to 226–311 (RIYVEARSRI…AARERKATKT (86 aa)). Over residues 255 to 268 (DSPGSTTSVTSINS) the composition is skewed to polar residues. The interval 255–278 (DSPGSTTSVTSINSRAPDLPSESG) is disordered. A helical transmembrane segment spans residues 312–333 (LGIILGAFIVCWLPFFIISLVM). The Extracellular portion of the chain corresponds to 334 to 343 (PICKDACWFH). A helical transmembrane segment spans residues 344–366 (MATLDFFNWLGYLNSLINPIIYT). The NPxxY motif; important for ligand-induced conformation changes and signaling motif lies at 361–365 (NPIIY). The Cytoplasmic portion of the chain corresponds to 367-386 (MSNEDFKQAFHKLIRFKCAG). Residue Cys384 is the site of S-palmitoyl cysteine attachment.

The protein belongs to the G-protein coupled receptor 1 family. In terms of assembly, homodimer. Heterodimer with HTR1D. In terms of processing, phosphorylated. Desensitization of the receptor may be mediated by its phosphorylation. Post-translationally, palmitoylated.

The protein localises to the cell membrane. In terms of biological role, G-protein coupled receptor for 5-hydroxytryptamine (serotonin). Also functions as a receptor for ergot alkaloid derivatives, various anxiolytic and antidepressant drugs and other psychoactive substances, such as lysergic acid diethylamide (LSD). Ligand binding causes a conformation change that triggers signaling via guanine nucleotide-binding proteins (G proteins) and modulates the activity of downstream effectors, such as adenylate cyclase. HTR1B is coupled to G(i)/G(o) G alpha proteins and mediates inhibitory neurotransmission by inhibiting adenylate cyclase activity. Arrestin family members inhibit signaling via G proteins and mediate activation of alternative signaling pathways. Regulates the release of 5-hydroxytryptamine, dopamine and acetylcholine in the brain, and thereby affects neural activity, nociceptive processing, pain perception, mood and behavior. Besides, plays a role in vasoconstriction of cerebral arteries. The polypeptide is 5-hydroxytryptamine receptor 1B (HTR1B) (Cricetulus griseus (Chinese hamster)).